The sequence spans 626 residues: tRNA uridine 5-carboxymethylaminomethyl modification enzyme MnmG (626 aa).

An FAD-binding site is contributed by G13–G18. G273–F287 serves as a coordination point for NAD(+).

The protein belongs to the MnmG family. Homodimer. Heterotetramer of two MnmE and two MnmG subunits. Requires FAD as cofactor.

Its subcellular location is the cytoplasm. In terms of biological role, NAD-binding protein involved in the addition of a carboxymethylaminomethyl (cmnm) group at the wobble position (U34) of certain tRNAs, forming tRNA-cmnm(5)s(2)U34. This Acinetobacter baumannii (strain AYE) protein is tRNA uridine 5-carboxymethylaminomethyl modification enzyme MnmG.